Consider the following 197-residue polypeptide: SERTA domain-containing protein 3 (197 aa).

Residues 1-23 (MGGLKRKHSDLEEEEEEEKWDWS) form a disordered region. The 48-residue stretch at 27 to 74 (LRSYQQALLRISLDKVQRSLGPRAPSLRRHVLIHNTLQQLQAAIRLAP) folds into the SERTA domain.

As to quaternary structure, interacts with RPA2.

The protein localises to the nucleus. It localises to the nucleolus. Its function is as follows. Antiviral interferon-stimulated protein that plays a role in innate immunity and in the suppression of viruses through different mechanisms. Plays a role in the late phase response of TLR-induced immune effector expression. Strong transcriptional coactivator. The sequence is that of SERTA domain-containing protein 3 (Sertad3) from Mus musculus (Mouse).